The primary structure comprises 129 residues: MEKLPDLATLKYNEQGLIPAIAQQYDTGEVLMMAWMNQTSLAETLSTGVACYWSRSRNRFWRKGESSGQVQTVKAVRLDCDKDTLLLLVDQQGVACHTGRHNCFYLEAQDGSWKTITDPEIDPEELYGK.

D79 is a binding site for Mg(2+). C80 serves as a coordination point for Zn(2+). D81 and D83 together coordinate Mg(2+). Positions 96 and 103 each coordinate Zn(2+).

This sequence belongs to the PRA-CH family. In terms of assembly, homodimer. Requires Mg(2+) as cofactor. Zn(2+) is required as a cofactor.

The protein resides in the cytoplasm. The enzyme catalyses 1-(5-phospho-beta-D-ribosyl)-5'-AMP + H2O = 1-(5-phospho-beta-D-ribosyl)-5-[(5-phospho-beta-D-ribosylamino)methylideneamino]imidazole-4-carboxamide. The protein operates within amino-acid biosynthesis; L-histidine biosynthesis; L-histidine from 5-phospho-alpha-D-ribose 1-diphosphate: step 3/9. Its function is as follows. Catalyzes the hydrolysis of the adenine ring of phosphoribosyl-AMP. The polypeptide is Phosphoribosyl-AMP cyclohydrolase (Magnetococcus marinus (strain ATCC BAA-1437 / JCM 17883 / MC-1)).